The chain runs to 217 residues: Probable transaldolase (217 aa).

The Schiff-base intermediate with substrate role is filled by Lys-83.

Belongs to the transaldolase family. Type 3B subfamily.

The protein localises to the cytoplasm. The catalysed reaction is D-sedoheptulose 7-phosphate + D-glyceraldehyde 3-phosphate = D-erythrose 4-phosphate + beta-D-fructose 6-phosphate. Its pathway is carbohydrate degradation; pentose phosphate pathway; D-glyceraldehyde 3-phosphate and beta-D-fructose 6-phosphate from D-ribose 5-phosphate and D-xylulose 5-phosphate (non-oxidative stage): step 2/3. Functionally, transaldolase is important for the balance of metabolites in the pentose-phosphate pathway. In Fervidobacterium nodosum (strain ATCC 35602 / DSM 5306 / Rt17-B1), this protein is Probable transaldolase.